Reading from the N-terminus, the 293-residue chain is 4-hydroxy-tetrahydrodipicolinate synthase (293 aa).

A pyruvate-binding site is contributed by Thr-47. Residue Tyr-136 is the Proton donor/acceptor of the active site. The active-site Schiff-base intermediate with substrate is the Lys-164. Ile-206 contributes to the pyruvate binding site.

It belongs to the DapA family. As to quaternary structure, homotetramer; dimer of dimers.

Its subcellular location is the cytoplasm. It catalyses the reaction L-aspartate 4-semialdehyde + pyruvate = (2S,4S)-4-hydroxy-2,3,4,5-tetrahydrodipicolinate + H2O + H(+). The protein operates within amino-acid biosynthesis; L-lysine biosynthesis via DAP pathway; (S)-tetrahydrodipicolinate from L-aspartate: step 3/4. Its function is as follows. Catalyzes the condensation of (S)-aspartate-beta-semialdehyde [(S)-ASA] and pyruvate to 4-hydroxy-tetrahydrodipicolinate (HTPA). This Listeria monocytogenes serotype 4b (strain CLIP80459) protein is 4-hydroxy-tetrahydrodipicolinate synthase.